We begin with the raw amino-acid sequence, 312 residues long: Methionyl-tRNA formyltransferase (312 aa).

109-112 (SLLP) serves as a coordination point for (6S)-5,6,7,8-tetrahydrofolate.

This sequence belongs to the Fmt family.

It catalyses the reaction L-methionyl-tRNA(fMet) + (6R)-10-formyltetrahydrofolate = N-formyl-L-methionyl-tRNA(fMet) + (6S)-5,6,7,8-tetrahydrofolate + H(+). Attaches a formyl group to the free amino group of methionyl-tRNA(fMet). The formyl group appears to play a dual role in the initiator identity of N-formylmethionyl-tRNA by promoting its recognition by IF2 and preventing the misappropriation of this tRNA by the elongation apparatus. This chain is Methionyl-tRNA formyltransferase, found in Listeria monocytogenes serotype 4a (strain HCC23).